The chain runs to 103 residues: Large ribosomal subunit protein bL21 (103 aa).

This sequence belongs to the bacterial ribosomal protein bL21 family. In terms of assembly, part of the 50S ribosomal subunit. Contacts protein L20.

This protein binds to 23S rRNA in the presence of protein L20. The chain is Large ribosomal subunit protein bL21 from Haemophilus influenzae (strain 86-028NP).